The chain runs to 311 residues: tRNA-cytidine(32) 2-sulfurtransferase (311 aa).

The PP-loop motif motif lies at 47 to 52 (SGGKDS). Positions 122, 125, and 213 each coordinate [4Fe-4S] cluster.

The protein belongs to the TtcA family. In terms of assembly, homodimer. It depends on Mg(2+) as a cofactor. [4Fe-4S] cluster serves as cofactor.

It is found in the cytoplasm. It carries out the reaction cytidine(32) in tRNA + S-sulfanyl-L-cysteinyl-[cysteine desulfurase] + AH2 + ATP = 2-thiocytidine(32) in tRNA + L-cysteinyl-[cysteine desulfurase] + A + AMP + diphosphate + H(+). It participates in tRNA modification. Its function is as follows. Catalyzes the ATP-dependent 2-thiolation of cytidine in position 32 of tRNA, to form 2-thiocytidine (s(2)C32). The sulfur atoms are provided by the cysteine/cysteine desulfurase (IscS) system. This chain is tRNA-cytidine(32) 2-sulfurtransferase, found in Escherichia coli (strain 55989 / EAEC).